The primary structure comprises 333 residues: Transcription factor HHO6 (333 aa).

An HTH myb-type domain is found at 189–249 (ALRKQRRCWN…HLQKYRLHIR (61 aa)). The H-T-H motif DNA-binding region spans 220–245 (PKQIREHMQEEGLTNDEVKSHLQKYR). The disordered stretch occupies residues 274-333 (DEEETCEGGESLKRSNAQSDSPQGPLQLPSTTTTTGGDSSMEDVEDAKSESFQLERLRSP). Residues 287–303 (RSNAQSDSPQGPLQLPS) are compositionally biased toward polar residues. Residues 319–333 (DAKSESFQLERLRSP) show a composition bias toward basic and acidic residues.

It localises to the nucleus. Its function is as follows. Probable transcription factor involved in phosphate signaling in roots. The chain is Transcription factor HHO6 from Arabidopsis thaliana (Mouse-ear cress).